Here is a 275-residue protein sequence, read N- to C-terminus: Formamidopyrimidine-DNA glycosylase (275 aa).

The active-site Schiff-base intermediate with DNA is the proline 2. The Proton donor role is filled by glutamate 3. The active-site Proton donor; for beta-elimination activity is lysine 60. The DNA site is built by histidine 93 and arginine 112. The FPG-type zinc finger occupies phenylalanine 240–lysine 274. Arginine 264 functions as the Proton donor; for delta-elimination activity in the catalytic mechanism.

Belongs to the FPG family. Monomer. It depends on Zn(2+) as a cofactor.

It carries out the reaction Hydrolysis of DNA containing ring-opened 7-methylguanine residues, releasing 2,6-diamino-4-hydroxy-5-(N-methyl)formamidopyrimidine.. The enzyme catalyses 2'-deoxyribonucleotide-(2'-deoxyribose 5'-phosphate)-2'-deoxyribonucleotide-DNA = a 3'-end 2'-deoxyribonucleotide-(2,3-dehydro-2,3-deoxyribose 5'-phosphate)-DNA + a 5'-end 5'-phospho-2'-deoxyribonucleoside-DNA + H(+). Its function is as follows. Involved in base excision repair of DNA damaged by oxidation or by mutagenic agents. Acts as a DNA glycosylase that recognizes and removes damaged bases. Has a preference for oxidized purines, such as 7,8-dihydro-8-oxoguanine (8-oxoG). Has AP (apurinic/apyrimidinic) lyase activity and introduces nicks in the DNA strand. Cleaves the DNA backbone by beta-delta elimination to generate a single-strand break at the site of the removed base with both 3'- and 5'-phosphates. The chain is Formamidopyrimidine-DNA glycosylase from Bacillus licheniformis (strain ATCC 14580 / DSM 13 / JCM 2505 / CCUG 7422 / NBRC 12200 / NCIMB 9375 / NCTC 10341 / NRRL NRS-1264 / Gibson 46).